The sequence spans 100 residues: Small ribosomal subunit protein uS14c (100 aa).

The protein belongs to the universal ribosomal protein uS14 family. Part of the 30S ribosomal subunit.

Its subcellular location is the plastid. The protein resides in the chloroplast. In terms of biological role, binds 16S rRNA, required for the assembly of 30S particles. This chain is Small ribosomal subunit protein uS14c, found in Pisum sativum (Garden pea).